A 256-amino-acid polypeptide reads, in one-letter code: Thiazole synthase (256 aa).

Lys-96 acts as the Schiff-base intermediate with DXP in catalysis. Residues Gly-157, 183-184 (AG), and 205-206 (NT) each bind 1-deoxy-D-xylulose 5-phosphate.

The protein belongs to the ThiG family. Homotetramer. Forms heterodimers with either ThiH or ThiS.

Its subcellular location is the cytoplasm. The enzyme catalyses [ThiS sulfur-carrier protein]-C-terminal-Gly-aminoethanethioate + 2-iminoacetate + 1-deoxy-D-xylulose 5-phosphate = [ThiS sulfur-carrier protein]-C-terminal Gly-Gly + 2-[(2R,5Z)-2-carboxy-4-methylthiazol-5(2H)-ylidene]ethyl phosphate + 2 H2O + H(+). Its pathway is cofactor biosynthesis; thiamine diphosphate biosynthesis. In terms of biological role, catalyzes the rearrangement of 1-deoxy-D-xylulose 5-phosphate (DXP) to produce the thiazole phosphate moiety of thiamine. Sulfur is provided by the thiocarboxylate moiety of the carrier protein ThiS. In vitro, sulfur can be provided by H(2)S. The polypeptide is Thiazole synthase (Bacillus cereus (strain ATCC 10987 / NRS 248)).